The sequence spans 285 residues: 2-dehydro-3-deoxyphosphooctonate aldolase (285 aa).

Belongs to the KdsA family.

The protein resides in the cytoplasm. It carries out the reaction D-arabinose 5-phosphate + phosphoenolpyruvate + H2O = 3-deoxy-alpha-D-manno-2-octulosonate-8-phosphate + phosphate. It participates in carbohydrate biosynthesis; 3-deoxy-D-manno-octulosonate biosynthesis; 3-deoxy-D-manno-octulosonate from D-ribulose 5-phosphate: step 2/3. It functions in the pathway bacterial outer membrane biogenesis; lipopolysaccharide biosynthesis. The chain is 2-dehydro-3-deoxyphosphooctonate aldolase from Bordetella parapertussis (strain 12822 / ATCC BAA-587 / NCTC 13253).